The following is a 447-amino-acid chain: N-succinylarginine dihydrolase (447 aa).

Substrate-binding positions include 19 to 28 (AGLSFGNEAS), N110, and 137 to 138 (HR). Residue E174 is part of the active site. Residue R212 coordinates substrate. Residue H248 is part of the active site. Positions 250 and 359 each coordinate substrate. Residue C365 is the Nucleophile of the active site.

Belongs to the succinylarginine dihydrolase family. In terms of assembly, homodimer.

It carries out the reaction N(2)-succinyl-L-arginine + 2 H2O + 2 H(+) = N(2)-succinyl-L-ornithine + 2 NH4(+) + CO2. The protein operates within amino-acid degradation; L-arginine degradation via AST pathway; L-glutamate and succinate from L-arginine: step 2/5. In terms of biological role, catalyzes the hydrolysis of N(2)-succinylarginine into N(2)-succinylornithine, ammonia and CO(2). This Escherichia coli O9:H4 (strain HS) protein is N-succinylarginine dihydrolase.